The sequence spans 237 residues: MKKITLALSAVCLLFTLNHSANALVSSPSTLNPGTNVAKLAEQAPVHWVSVAQIENSLTGRPPMAVGFDIDDTVLFSSPGFWRGKKTYSPDSDDYLKNPAFWEKMNNGWDEFSIPKEVARQLIDMHVRRGDSIYFVTGRSQTKTETVSKTLADNFHIPAANMNPVIFAGDKPGQNTKVQWLQEKNMRIFYGDSDNDITAARDCGIRGIRILRAANSTYKPLPQAGAFGEEVIVNSEY.

The first 23 residues, 1–23 (MKKITLALSAVCLLFTLNHSANA), serve as a signal peptide directing secretion. The active-site Nucleophile is the D69. Mg(2+) is bound by residues D69 and D71. Catalysis depends on D71, which acts as the Proton donor. Substrate-binding positions include 137–138 (TG) and K177. Position 192 (D192) interacts with Mg(2+).

This sequence belongs to the class B bacterial acid phosphatase family. Homotetramer. The cofactor is Mg(2+).

It localises to the periplasm. The catalysed reaction is a phosphate monoester + H2O = an alcohol + phosphate. Functionally, dephosphorylates several organic phosphate monoesters including monophosphate nucleotides (NMPs), coenzyme A (CoA), nicotinamide adenine dinucleotide phosphate (NADP), flavin mononucleotide (FMN) and phosphorylated 5-6 carbon sugars in vitro. Also has a phosphotransferase activity catalyzing the transfer of low-energy phosphate groups from organic phosphate monoesters to free hydroxyl groups of various organic compounds. The protein is Class B acid phosphatase (aphA) of Salmonella typhi.